The primary structure comprises 503 residues: Cytochrome P450 3A14 (503 aa).

Residue C442 coordinates heme.

Belongs to the cytochrome P450 family. It depends on heme as a cofactor.

The protein resides in the endoplasmic reticulum membrane. It localises to the microsome membrane. It carries out the reaction an organic molecule + reduced [NADPH--hemoprotein reductase] + O2 = an alcohol + oxidized [NADPH--hemoprotein reductase] + H2O + H(+). Functionally, cytochromes P450 are a group of heme-thiolate monooxygenases. In liver microsomes, this enzyme is involved in an NADPH-dependent electron transport pathway. It oxidizes a variety of structurally unrelated compounds, including steroids, fatty acids, and xenobiotics. This Cavia porcellus (Guinea pig) protein is Cytochrome P450 3A14 (CYP3A14).